Reading from the N-terminus, the 170-residue chain is dCTP pyrophosphatase 1 (170 aa).

Residues 1 to 25 (MSQAGTGVCGNGGQEDSAAAGPFSF) are disordered. Position 2 is an N-acetylserine (Ser2). Position 2 is a phosphoserine (Ser2). Residues His38 and 47 to 51 (WEQFH) contribute to the substrate site. Mg(2+) contacts are provided by Glu63 and Glu66. Trp73 contributes to the substrate binding site. Positions 95 and 98 each coordinate Mg(2+). Substrate is bound at residue Tyr102. The segment at 149–170 (LSENEAVGSGDPASELGNQAST) is disordered.

As to quaternary structure, homotetramer. Mg(2+) is required as a cofactor.

The protein resides in the cytoplasm. Its subcellular location is the cytosol. It catalyses the reaction dCTP + H2O = dCMP + diphosphate + H(+). Its function is as follows. Hydrolyzes deoxynucleoside triphosphates (dNTPs) to the corresponding nucleoside monophosphates. Has a strong preference for dCTP and its analogs including 5-iodo-dCTP and 5-methyl-dCTP for which it may even have a higher efficiency. May protect DNA or RNA against the incorporation of these genotoxic nucleotide analogs through their catabolism. The protein is dCTP pyrophosphatase 1 of Rattus norvegicus (Rat).